A 918-amino-acid chain; its full sequence is Cell cycle and apoptosis regulator protein 2 (918 aa).

A disordered region spans residues 1-35 (MSQFKRQRINPLPGGRNFSGTASTSLLGPPPGLLT). Phosphothreonine is present on Thr35. An N6-acetyllysine; by KAT8 modification is found at Lys112. Lys123 is modified (N6-methyllysine). Position 124 is a phosphoserine (Ser124). Disordered regions lie at residues 179–219 (NRFP…KPRH), 446–510 (KAAE…PAVI), and 568–637 (VSPP…ASED). Arg180 is modified (omega-N-methylarginine). An N6-acetyllysine; by KAT8 modification is found at Lys215. Low complexity-rich tracts occupy residues 447 to 468 (AAEAAPPTQEAPGETEPTEQAP) and 482 to 492 (AETPEATTQQE). Thr454 carries the phosphothreonine; by ATM, ATR and CK2 modification. Phosphothreonine is present on Thr484. At Ser569 the chain carries Phosphoserine. Residues 572–597 (EPEKEEAAKEEEAIKEEVVKEPKDEA) show a composition bias toward basic and acidic residues. A Glycyl lysine isopeptide (Lys-Gly) (interchain with G-Cter in SUMO2 and SUMO3); alternate cross-link involves residue Lys586. A Glycyl lysine isopeptide (Lys-Gly) (interchain with G-Cter in SUMO2); alternate cross-link involves residue Lys586. The tract at residues 605-665 (ESEAPLKEDG…EEFAGAKLED (61 aa)) is interaction with MCC. Phosphoserine is present on residues Ser622, Ser670, Ser673, Ser676, Ser682, and Ser803. The segment at 699–918 (DCLLAFVFFD…VEKEEPAPSN (220 aa)) is interaction with NR1D1. Residues 824–904 (LENRIHTLEL…QLEIQRVVEK (81 aa)) are a coiled coil. A Phosphothreonine modification is found at Thr892.

As to quaternary structure, component of the DBIRD complex. Interacts with ZNF326/ZIRD; the interaction is direct. Interacts (via N-terminus) with SIRT1, which inhibits the deacetylation of substrates. Interacts (via N-terminus) with SUV39H1; this interaction abolishes the interaction with SIRT1. Component of a nuclear receptor-mediated transcription complex composed of at least ZNF335, CCAR2 and EMSY; the complex stimulates the transcription of nuclear receptor target genes such as SOX9 and HOXA1. Within the complex interacts with EMSY and interacts with ZNF335 (via C-terminus). Components of this complex may associate with components of a histone methylation complex to form a complex at least composed of ZNF335, HCFC1, CCAR2, EMSY, MKI67, RBBP5, ASH2L and WDR5. Within this complex, interacts with ASH2L. Interacts with NR1D1. Interacts (via N-terminus) with ESR1 and ESR2. Interacts (via N-terminus) with HDAC3 (via C-terminus). Interacts with HDAC1 and MED2F. Interacts with MCC. Interacts (via N-terminus) with NR1H2 and NR1H3 in a ligand-independent manner. Interacts with CSNK2A1. Interacts (via N-terminus) with p53/TP53. Interacts (via N-terminus) with BRCA1 (via the BRCT domains). Interacts (via N-terminus) with CHEK2 (via protein kinase domain). Interacts with PSEM3. Interacts (via N-terminus) with PSIA3 and SENP1. The sumoylated form shows a preferential interaction with SIRT1 as compared to its unmodified form. Interacts with CECR2; may form part of the CERF-1 and/or CEF-5 ISWI chromatin remodeling complexes in embryonic stem cells. Post-translationally, ATM/ATR-mediated phosphorylation at Thr-454 upon DNA damage promotes binding to SIRT1. Phosphorylation at Thr-454 promotes its sumoylation by switching the binding partner of CCAR2 from SENP1 to PIAS3. Acetylation at Lys-112 and Lys-215 by KAT8 prevents inhibitory binding to SIRT1 and increases its deacetylase activity. In terms of processing, genotoxic stress induces its sumoylation and sumoylation promotes the SIRT1-CCAR2 interaction which in turn inhibits SIRT1-mediated deacetylation of p53/TP53. Sumoylation leads to transcriptional activation of p53/TP53 by sequestering SIRT1 from p53/TP53. Desumoylated by SENP1.

It is found in the nucleus. The protein resides in the cytoplasm. It localises to the cytoskeleton. The protein localises to the spindle. Core component of the DBIRD complex, a multiprotein complex that acts at the interface between core mRNP particles and RNA polymerase II (RNAPII) and integrates transcript elongation with the regulation of alternative splicing: the DBIRD complex affects local transcript elongation rates and alternative splicing of a large set of exons embedded in (A + T)-rich DNA regions. Inhibits SIRT1 deacetylase activity leading to increasing levels of p53/TP53 acetylation and p53-mediated apoptosis. Inhibits SUV39H1 methyltransferase activity. Mediates ligand-dependent transcriptional activation by nuclear hormone receptors. Plays a critical role in maintaining genomic stability and cellular integrity following UV-induced genotoxic stress. Regulates the circadian expression of the core clock components NR1D1 and BMAL1. Enhances the transcriptional repressor activity of NR1D1 through stabilization of NR1D1 protein levels by preventing its ubiquitination and subsequent degradation. Represses the ligand-dependent transcriptional activation function of ESR2. Acts as a regulator of PCK1 expression and gluconeogenesis by a mechanism that involves, at least in part, both NR1D1 and SIRT1. Negatively regulates the deacetylase activity of HDAC3 and can alter its subcellular localization. Positively regulates the beta-catenin pathway (canonical Wnt signaling pathway) and is required for MCC-mediated repression of the beta-catenin pathway. Represses ligand-dependent transcriptional activation function of NR1H2 and NR1H3 and inhibits the interaction of SIRT1 with NR1H3. Plays an important role in tumor suppression through p53/TP53 regulation; stabilizes p53/TP53 by affecting its interaction with ubiquitin ligase MDM2. Represses the transcriptional activator activity of BRCA1. Inhibits SIRT1 in a CHEK2 and PSEM3-dependent manner and inhibits the activity of CHEK2 in vitro. The sequence is that of Cell cycle and apoptosis regulator protein 2 (CCAR2) from Pongo abelii (Sumatran orangutan).